The sequence spans 103 residues: Phosphoribosyl-ATP pyrophosphatase (103 aa).

Belongs to the PRA-PH family.

The protein resides in the cytoplasm. It catalyses the reaction 1-(5-phospho-beta-D-ribosyl)-ATP + H2O = 1-(5-phospho-beta-D-ribosyl)-5'-AMP + diphosphate + H(+). Its pathway is amino-acid biosynthesis; L-histidine biosynthesis; L-histidine from 5-phospho-alpha-D-ribose 1-diphosphate: step 2/9. This is Phosphoribosyl-ATP pyrophosphatase from Cereibacter sphaeroides (strain KD131 / KCTC 12085) (Rhodobacter sphaeroides).